We begin with the raw amino-acid sequence, 100 residues long: Integration host factor subunit alpha (100 aa).

The protein belongs to the bacterial histone-like protein family. Heterodimer of an alpha and a beta chain.

In terms of biological role, this protein is one of the two subunits of integration host factor, a specific DNA-binding protein that functions in genetic recombination as well as in transcriptional and translational control. This is Integration host factor subunit alpha from Hahella chejuensis (strain KCTC 2396).